Here is a 152-residue protein sequence, read N- to C-terminus: Nucleoside diphosphate kinase (152 aa).

Residues lysine 11, phenylalanine 59, arginine 87, threonine 93, arginine 104, and asparagine 114 each coordinate ATP. Residue histidine 117 is the Pros-phosphohistidine intermediate of the active site.

This sequence belongs to the NDK family. Homotetramer. The cofactor is Mg(2+).

The protein resides in the cytoplasm. The enzyme catalyses a 2'-deoxyribonucleoside 5'-diphosphate + ATP = a 2'-deoxyribonucleoside 5'-triphosphate + ADP. It catalyses the reaction a ribonucleoside 5'-diphosphate + ATP = a ribonucleoside 5'-triphosphate + ADP. Its function is as follows. Major role in the synthesis of nucleoside triphosphates other than ATP. The ATP gamma phosphate is transferred to the NDP beta phosphate via a ping-pong mechanism, using a phosphorylated active-site intermediate. This Prochlorococcus marinus (strain MIT 9313) protein is Nucleoside diphosphate kinase.